The primary structure comprises 896 residues: Rho GTPase-activating protein gacM (896 aa).

Residues 1 to 97 form a disordered region; the sequence is MSSFIGWKKN…SSNDTIGKSS (97 aa). The span at 10-26 shows a compositional bias: low complexity; the sequence is NSNSGGTPGASPTSSSP. Positions 27-38 are enriched in polar residues; that stretch reads LNSTISNANSVS. Composition is skewed to low complexity over residues 45 to 57 and 65 to 97; these read SISN…LSSS and NSNN…GKSS. Positions 139–330 constitute a Rho-GAP domain; the sequence is QPINPNTEFG…LWIEEFDMIS (192 aa). 4 stretches are compositionally biased toward low complexity: residues 375 to 391, 400 to 427, 448 to 460, and 473 to 506; these read IQQQ…QSHP, SSLS…LLPT, PTPT…TPQT, and NNNS…NNNN. Disordered stretches follow at residues 375–514 and 701–770; these read IQQQ…GSPL and LPTG…ENQI. A compositionally biased stretch (polar residues) spans 702–711; that stretch reads PTGSSWSDFE. Low complexity-rich tracts occupy residues 712-743 and 751-761; these read NNSS…NSSP and SNGLNSSSNSN.

Its subcellular location is the cytoplasm. Rho GTPase-activating protein involved in the signal transduction pathway. The chain is Rho GTPase-activating protein gacM (gacM) from Dictyostelium discoideum (Social amoeba).